A 692-amino-acid polypeptide reads, in one-letter code: Elongation factor G (692 aa).

The tr-type G domain occupies 8–282 (ENTRNIGIMA…AVIDYLPSPL (275 aa)). Residues 17 to 24 (AHIDAGKT), 81 to 85 (DTPGH), and 135 to 138 (NKMD) each bind GTP.

The protein belongs to the TRAFAC class translation factor GTPase superfamily. Classic translation factor GTPase family. EF-G/EF-2 subfamily.

The protein localises to the cytoplasm. Its function is as follows. Catalyzes the GTP-dependent ribosomal translocation step during translation elongation. During this step, the ribosome changes from the pre-translocational (PRE) to the post-translocational (POST) state as the newly formed A-site-bound peptidyl-tRNA and P-site-bound deacylated tRNA move to the P and E sites, respectively. Catalyzes the coordinated movement of the two tRNA molecules, the mRNA and conformational changes in the ribosome. This Bacillus cereus (strain ATCC 14579 / DSM 31 / CCUG 7414 / JCM 2152 / NBRC 15305 / NCIMB 9373 / NCTC 2599 / NRRL B-3711) protein is Elongation factor G.